Here is a 662-residue protein sequence, read N- to C-terminus: Tubulin--tyrosine ligase-like protein 12 (662 aa).

The TTL domain maps to 324–660 (LKKRKIKVYA…LDEIDPTKVT (337 aa)). Residues 472–475 (CEYI), Lys491, and Asp493 contribute to the ATP site.

Belongs to the tubulin--tyrosine ligase family.

Its function is as follows. Regulates microtubule dynamics in uterine muscle cells. The polypeptide is Tubulin--tyrosine ligase-like protein 12 (Caenorhabditis elegans).